The primary structure comprises 254 residues: Triosephosphate isomerase (254 aa).

12–14 contacts substrate; that stretch reads NWK. H99 (electrophile) is an active-site residue. E169 serves as the catalytic Proton acceptor. Residues G175, S214, and 235–236 each bind substrate; that span reads GG.

It belongs to the triosephosphate isomerase family. In terms of assembly, homodimer.

The protein resides in the cytoplasm. It carries out the reaction D-glyceraldehyde 3-phosphate = dihydroxyacetone phosphate. Its pathway is carbohydrate biosynthesis; gluconeogenesis. It functions in the pathway carbohydrate degradation; glycolysis; D-glyceraldehyde 3-phosphate from glycerone phosphate: step 1/1. In terms of biological role, involved in the gluconeogenesis. Catalyzes stereospecifically the conversion of dihydroxyacetone phosphate (DHAP) to D-glyceraldehyde-3-phosphate (G3P). In Bartonella bacilliformis (strain ATCC 35685 / KC583 / Herrer 020/F12,63), this protein is Triosephosphate isomerase.